A 555-amino-acid polypeptide reads, in one-letter code: Formate--tetrahydrofolate ligase (555 aa).

ATP is bound at residue Thr-65 to Thr-72.

Belongs to the formate--tetrahydrofolate ligase family.

The enzyme catalyses (6S)-5,6,7,8-tetrahydrofolate + formate + ATP = (6R)-10-formyltetrahydrofolate + ADP + phosphate. It functions in the pathway one-carbon metabolism; tetrahydrofolate interconversion. The chain is Formate--tetrahydrofolate ligase from Caldanaerobacter subterraneus subsp. tengcongensis (strain DSM 15242 / JCM 11007 / NBRC 100824 / MB4) (Thermoanaerobacter tengcongensis).